Consider the following 63-residue polypeptide: MSRGNQRDVDRARNLKKSQASKKKQAGDPTKRLEAQAEIMRAKQRAADERKAAEANGGSKGKK.

Residues 1-13 (MSRGNQRDVDRAR) are compositionally biased toward basic and acidic residues. Residues 1–63 (MSRGNQRDVD…EANGGSKGKK (63 aa)) form a disordered region. Residues 14-24 (NLKKSQASKKK) show a composition bias toward basic residues. Positions 25–35 (QAGDPTKRLEA) are enriched in basic and acidic residues.

It belongs to the SERF family.

It localises to the cytoplasm. Its subcellular location is the nucleus. It is found in the nucleolus. In Schizosaccharomyces pombe (strain 972 / ATCC 24843) (Fission yeast), this protein is SERF-like protein C1705.02.